The sequence spans 41 residues: uncharacterized protein (41 aa).

It is found in the plastid. The protein resides in the chloroplast. This is an uncharacterized protein from Trieres chinensis (Marine centric diatom).